Here is a 177-residue protein sequence, read N- to C-terminus: Large ribosomal subunit protein uL6 (177 aa).

The interval 151-177 (KRPPEPYKGKGVKYADEHIRRKEGKKS) is disordered. Residues 152–177 (RPPEPYKGKGVKYADEHIRRKEGKKS) show a composition bias toward basic and acidic residues.

Belongs to the universal ribosomal protein uL6 family. In terms of assembly, part of the 50S ribosomal subunit.

Functionally, this protein binds to the 23S rRNA, and is important in its secondary structure. It is located near the subunit interface in the base of the L7/L12 stalk, and near the tRNA binding site of the peptidyltransferase center. The polypeptide is Large ribosomal subunit protein uL6 (Fusobacterium nucleatum subsp. nucleatum (strain ATCC 25586 / DSM 15643 / BCRC 10681 / CIP 101130 / JCM 8532 / KCTC 2640 / LMG 13131 / VPI 4355)).